We begin with the raw amino-acid sequence, 474 residues long: tRNA-2-methylthio-N(6)-dimethylallyladenosine synthase (474 aa).

The region spanning 3–120 is the MTTase N-terminal domain; it reads KKLHIKTWGC…LPEMINHVQG (118 aa). Residues C12, C49, C83, C157, C161, and C164 each coordinate [4Fe-4S] cluster. The Radical SAM core domain maps to 143–375; the sequence is RAEGPTAFVS…QQRISQQAME (233 aa). In terms of domain architecture, TRAM spans 378 to 441; that stretch reads RKMVGTVQRV…ASSLRGILLR (64 aa).

Belongs to the methylthiotransferase family. MiaB subfamily. Monomer. Requires [4Fe-4S] cluster as cofactor.

It localises to the cytoplasm. It carries out the reaction N(6)-dimethylallyladenosine(37) in tRNA + (sulfur carrier)-SH + AH2 + 2 S-adenosyl-L-methionine = 2-methylsulfanyl-N(6)-dimethylallyladenosine(37) in tRNA + (sulfur carrier)-H + 5'-deoxyadenosine + L-methionine + A + S-adenosyl-L-homocysteine + 2 H(+). Its function is as follows. Catalyzes the methylthiolation of N6-(dimethylallyl)adenosine (i(6)A), leading to the formation of 2-methylthio-N6-(dimethylallyl)adenosine (ms(2)i(6)A) at position 37 in tRNAs that read codons beginning with uridine. This Yersinia pseudotuberculosis serotype O:1b (strain IP 31758) protein is tRNA-2-methylthio-N(6)-dimethylallyladenosine synthase.